The primary structure comprises 179 residues: DNA utilization protein HofN (179 aa).

The chain crosses the membrane as a helical span at residues Leu-19–Ile-39.

The protein resides in the cell inner membrane. In terms of biological role, required for the use of extracellular DNA as a nutrient. The polypeptide is DNA utilization protein HofN (hofN) (Escherichia coli (strain K12)).